The following is a 264-amino-acid chain: Regulatory protein RecX (264 aa).

Belongs to the RecX family.

Its subcellular location is the cytoplasm. Its function is as follows. Modulates RecA activity. This Limosilactobacillus reuteri (strain DSM 20016) (Lactobacillus reuteri) protein is Regulatory protein RecX.